Consider the following 440-residue polypeptide: Muscarinic acetylcholine receptor M2 (440 aa).

A helical membrane pass occupies residues 1–19; sequence VLVAGSLSLVTIIGNILVM. The Cytoplasmic portion of the chain corresponds to 20-33; it reads VSIKVNRHLQTVNN. Residues 34-54 form a helical membrane-spanning segment; that stretch reads YFLFSLACADLIIGVFSMNLY. Topologically, residues 55–71 are extracellular; it reads TLYTVIGYWPLGPVVCD. Residues Cys-70 and Cys-150 are joined by a disulfide bond. The chain crosses the membrane as a helical span at residues 72–93; it reads LWLALDYVVSNASVMNLLIISF. An Important for signaling motif is present at residues 94-96; it reads DRY. At 94 to 113 the chain is on the cytoplasmic side; it reads DRYFCVTKPLTYPVKRTTKM. Residues 114–136 form a helical membrane-spanning segment; it reads AGMMIAAAWVLSFILWAPAILFW. The Extracellular portion of the chain corresponds to 137-158; the sequence is QFIVGVRTVEDGECYIQFFSNA. The chain crosses the membrane as a helical span at residues 159–183; sequence AVTFGTAIAAFYLPVIIMTVLYWHI. Residues 184 to 361 are Cytoplasmic-facing; that stretch reads SRASKSRIKK…PPSREKKVTR (178 aa). Residues 192 to 329 form a disordered region; it reads KKDKKEPVAN…VVGSSGQNGD (138 aa). At Ser-206 the chain carries Phosphoserine. A compositionally biased stretch (basic and acidic residues) spans 228–244; the sequence is GLEHNKIQNGKAPRDPV. Composition is skewed to polar residues over residues 258 to 267, 278 to 287, and 308 to 327; these read NDSTSVSAVA, DENTVSTSLG, and SDSC…SGQN. A helical transmembrane segment spans residues 362–384; the sequence is TILAILLAFIITWAPYNVMVLIN. Residues 385–392 lie on the Extracellular side of the membrane; it reads TFCAPCIP. An intrachain disulfide couples Cys-387 to Cys-390. The helical transmembrane segment at 393–416 threads the bilayer; sequence NTVWTIGYWLCYINSTINPACYAL. The Important for signaling motif lies at 410 to 414; it reads NPACY. The Cytoplasmic portion of the chain corresponds to 417-440; the sequence is CNATFKKTFKHLLMCHYKNIGATR. Thr-420, Thr-424, and Thr-439 each carry phosphothreonine.

The protein belongs to the G-protein coupled receptor 1 family. Muscarinic acetylcholine receptor subfamily. CHRM2 sub-subfamily. As to quaternary structure, interacts with ARRB1 and ARRB2. Interacts with RACK1; the interaction regulates CHRM2 internalization. Phosphorylated in response to agonist treatment.

It localises to the cell membrane. Its subcellular location is the postsynaptic cell membrane. Functionally, the muscarinic acetylcholine receptor mediates various cellular responses, including inhibition of adenylate cyclase, breakdown of phosphoinositides and modulation of potassium channels through the action of G proteins. Primary transducing effect is adenylate cyclase inhibition. Signaling promotes phospholipase C activity, leading to the release of inositol trisphosphate (IP3); this then triggers calcium ion release into the cytosol. In Pan troglodytes (Chimpanzee), this protein is Muscarinic acetylcholine receptor M2 (CHRM2).